Here is a 473-residue protein sequence, read N- to C-terminus: Photosystem II CP43 reaction center protein (473 aa).

The propeptide occupies 1–14 (MKTLYSLRRFYPVE). T15 carries the N-acetylthreonine modification. Phosphothreonine is present on T15. Helical transmembrane passes span 69–93 (LFEVAHFVPEKPMYEQGLILLPHLA), 134–155 (LLGPETLEESFPFFGYVWKDRN), 178–200 (KALYFGGVYDTWAPGGGDVRKIT), 255–275 (KPFAWARRALVWSGEAYLSYS), and 291–312 (WFNNTAYPSEFYGPTGPEASQA). Position 367 (E367) interacts with [CaMn4O5] cluster. A helical membrane pass occupies residues 447–471 (RARAAAAGFEKGIDRDFEPVLSMTP).

This sequence belongs to the PsbB/PsbC family. PsbC subfamily. As to quaternary structure, PSII is composed of 1 copy each of membrane proteins PsbA, PsbB, PsbC, PsbD, PsbE, PsbF, PsbH, PsbI, PsbJ, PsbK, PsbL, PsbM, PsbT, PsbX, PsbY, PsbZ, Psb30/Ycf12, at least 3 peripheral proteins of the oxygen-evolving complex and a large number of cofactors. It forms dimeric complexes. Binds multiple chlorophylls and provides some of the ligands for the Ca-4Mn-5O cluster of the oxygen-evolving complex. It may also provide a ligand for a Cl- that is required for oxygen evolution. PSII binds additional chlorophylls, carotenoids and specific lipids. is required as a cofactor.

It localises to the plastid. Its subcellular location is the chloroplast thylakoid membrane. Functionally, one of the components of the core complex of photosystem II (PSII). It binds chlorophyll and helps catalyze the primary light-induced photochemical processes of PSII. PSII is a light-driven water:plastoquinone oxidoreductase, using light energy to abstract electrons from H(2)O, generating O(2) and a proton gradient subsequently used for ATP formation. The sequence is that of Photosystem II CP43 reaction center protein from Daucus carota (Wild carrot).